Reading from the N-terminus, the 206-residue chain is Small ribosomal subunit protein uS4A (206 aa).

The S4 RNA-binding domain maps to glycine 96 to glycine 156.

The protein belongs to the universal ribosomal protein uS4 family. As to quaternary structure, part of the 30S ribosomal subunit. Contacts protein S5. The interaction surface between S4 and S5 is involved in control of translational fidelity.

In terms of biological role, one of the primary rRNA binding proteins, it binds directly to 16S rRNA where it nucleates assembly of the body of the 30S subunit. With S5 and S12 plays an important role in translational accuracy. The polypeptide is Small ribosomal subunit protein uS4A (Psychromonas ingrahamii (strain DSM 17664 / CCUG 51855 / 37)).